An 83-amino-acid polypeptide reads, in one-letter code: Small ribosomal subunit protein bS20 (83 aa).

A disordered region spans residues 60–83; the sequence is ASKGLIHKNKASRDKSRLAAKLAN.

It belongs to the bacterial ribosomal protein bS20 family.

Functionally, binds directly to 16S ribosomal RNA. The polypeptide is Small ribosomal subunit protein bS20 (Streptococcus thermophilus (strain CNRZ 1066)).